A 256-amino-acid chain; its full sequence is Enolase-phosphatase E1 (256 aa).

Mg(2+) contacts are provided by D13 and E15. Residues 127–128 and K175 each bind substrate; that span reads SS. Mg(2+) is bound at residue D202.

Belongs to the HAD-like hydrolase superfamily. MasA/MtnC family. Monomer. Mg(2+) serves as cofactor.

The protein localises to the cytoplasm. It localises to the nucleus. It catalyses the reaction 5-methylsulfanyl-2,3-dioxopentyl phosphate + H2O = 1,2-dihydroxy-5-(methylsulfanyl)pent-1-en-3-one + phosphate. The protein operates within amino-acid biosynthesis; L-methionine biosynthesis via salvage pathway; L-methionine from S-methyl-5-thio-alpha-D-ribose 1-phosphate: step 3/6. It functions in the pathway amino-acid biosynthesis; L-methionine biosynthesis via salvage pathway; L-methionine from S-methyl-5-thio-alpha-D-ribose 1-phosphate: step 4/6. In terms of biological role, bifunctional enzyme that catalyzes the enolization of 2,3-diketo-5-methylthiopentyl-1-phosphate (DK-MTP-1-P) into the intermediate 2-hydroxy-3-keto-5-methylthiopentenyl-1-phosphate (HK-MTPenyl-1-P), which is then dephosphorylated to form the acireductone 1,2-dihydroxy-3-keto-5-methylthiopentene (DHK-MTPene). This Botryotinia fuckeliana (strain B05.10) (Noble rot fungus) protein is Enolase-phosphatase E1 (utr4).